Here is a 470-residue protein sequence, read N- to C-terminus: Cell division protein FtsA (470 aa).

The segment at 416–470 is disordered; the sequence is NKKDTHENEVESTDEEIYQSEDNHQEHKQNHEHVQDKDKDKEESKFKKLMKSLFE. The span at 425–434 shows a compositional bias: acidic residues; it reads VESTDEEIYQ. Residues 436 to 461 are compositionally biased toward basic and acidic residues; sequence EDNHQEHKQNHEHVQDKDKDKEESKF.

This sequence belongs to the FtsA/MreB family. In terms of assembly, self-interacts. Interacts with FtsZ.

The protein localises to the cell membrane. Cell division protein that is involved in the assembly of the Z ring. May serve as a membrane anchor for the Z ring. The chain is Cell division protein FtsA from Staphylococcus aureus (strain NCTC 8325 / PS 47).